We begin with the raw amino-acid sequence, 485 residues long: Aspartyl/glutamyl-tRNA(Asn/Gln) amidotransferase subunit B (485 aa).

It belongs to the GatB/GatE family. GatB subfamily. As to quaternary structure, heterotrimer of A, B and C subunits.

It catalyses the reaction L-glutamyl-tRNA(Gln) + L-glutamine + ATP + H2O = L-glutaminyl-tRNA(Gln) + L-glutamate + ADP + phosphate + H(+). The catalysed reaction is L-aspartyl-tRNA(Asn) + L-glutamine + ATP + H2O = L-asparaginyl-tRNA(Asn) + L-glutamate + ADP + phosphate + 2 H(+). Allows the formation of correctly charged Asn-tRNA(Asn) or Gln-tRNA(Gln) through the transamidation of misacylated Asp-tRNA(Asn) or Glu-tRNA(Gln) in organisms which lack either or both of asparaginyl-tRNA or glutaminyl-tRNA synthetases. The reaction takes place in the presence of glutamine and ATP through an activated phospho-Asp-tRNA(Asn) or phospho-Glu-tRNA(Gln). The protein is Aspartyl/glutamyl-tRNA(Asn/Gln) amidotransferase subunit B of Gluconobacter oxydans (strain 621H) (Gluconobacter suboxydans).